Here is a 308-residue protein sequence, read N- to C-terminus: Taste receptor type 2 member 46 (308 aa).

Met-1 is a topological domain (extracellular). The chain crosses the membrane as a helical span at residues 2–22 (ITFLSITFSILVGVIFVIGNF). The Cytoplasmic segment spans residues 23–46 (ANGFIALVNSIEWVKRQKISFADQ). The helical transmembrane segment at 47 to 67 (ILTGLAVSRVGLLWVLLLHLY) threads the bilayer. Over 68 to 86 (ATEFNLAFYSVEVRITAYN) the chain is Extracellular. Residues 87-107 (VWIVTNHFSNWLSTSLSMFYL) traverse the membrane as a helical segment. At 108–126 (LKIATFSNLIFLHLKRKVK) the chain is on the cytoplasmic side. The chain crosses the membrane as a helical span at residues 127-147 (SVILVTLLGPLLFLVCHLFVM). Topologically, residues 148 to 178 (NMNHIVWRKEYEGNITWRIKLRSAMYLSNVT) are extracellular. N-linked (GlcNAc...) asparagine glycosylation is found at Asn-161 and Asn-176. A helical transmembrane segment spans residues 179-199 (VTMLANLIPLTLTLMSFLLLI). Topologically, residues 200–229 (CSLCKHLKKMQVHGKGSQDPSTKVHIKALQ) are cytoplasmic. Residues 230–250 (TVTSFLLLCAIYFLSMILSVW) traverse the membrane as a helical segment. The Extracellular segment spans residues 251 to 258 (NFELEKKP). Residues 259-279 (VFMFCQAVIFSYPSTHPLILI) form a helical membrane-spanning segment. Residues 280-308 (WGNKKLKQIFLSVLWNVRYWVKGQKPSSP) are Cytoplasmic-facing.

This sequence belongs to the G-protein coupled receptor T2R family.

It is found in the membrane. The protein resides in the cell projection. Its subcellular location is the cilium membrane. Receptor that may play a role in the perception of bitterness and is gustducin-linked. May play a role in sensing the chemical composition of the gastrointestinal content. The activity of this receptor may stimulate alpha gustducin, mediate PLC-beta-2 activation and lead to the gating of TRPM5. In airway epithelial cells, binding of bitter compounds increases the intracellular calcium ion concentration and stimulates ciliary beat frequency. The chain is Taste receptor type 2 member 46 (TAS2R46) from Macaca mulatta (Rhesus macaque).